We begin with the raw amino-acid sequence, 238 residues long: Purine nucleoside phosphorylase DeoD-type (238 aa).

An a purine D-ribonucleoside-binding site is contributed by His-4. Phosphate contacts are provided by residues Gly-20, Arg-24, Arg-43, and 87–90 (RVGS). Residues 179-181 (EME) and 203-204 (SD) each bind a purine D-ribonucleoside. Asp-204 (proton donor) is an active-site residue.

It belongs to the PNP/UDP phosphorylase family. In terms of assembly, homohexamer; trimer of homodimers.

The enzyme catalyses a purine D-ribonucleoside + phosphate = a purine nucleobase + alpha-D-ribose 1-phosphate. The catalysed reaction is a purine 2'-deoxy-D-ribonucleoside + phosphate = a purine nucleobase + 2-deoxy-alpha-D-ribose 1-phosphate. Its function is as follows. Catalyzes the reversible phosphorolytic breakdown of the N-glycosidic bond in the beta-(deoxy)ribonucleoside molecules, with the formation of the corresponding free purine bases and pentose-1-phosphate. This is Purine nucleoside phosphorylase DeoD-type from Haemophilus influenzae (strain 86-028NP).